The following is a 509-amino-acid chain: Proto-oncogene tyrosine-protein kinase LCK (509 aa).

Residue G2 is the site of N-myristoyl glycine attachment. Positions G2–Y72 are interactions with CD4 and CD8. Residues C3 and C5 are each lipidated (S-palmitoyl cysteine). An SH3 domain is found at L61–S121. K99 is covalently cross-linked (Glycyl lysine isopeptide (Lys-Gly) (interchain with G-Cter in ubiquitin)). A Phosphoserine modification is found at S102. In terms of domain architecture, SH2 spans W127 to C224. The interval R154 to R242 is interaction with PTPRH. T159 bears the Phosphothreonine mark. At S162 the chain carries Phosphoserine. Y192 is modified (phosphotyrosine). Phosphoserine is present on S194. Residues L245–F498 enclose the Protein kinase domain. Residues L251–V259 and K273 contribute to the ATP site. K276 participates in a covalent cross-link: Glycyl lysine isopeptide (Lys-Gly) (interchain with G-Cter in ubiquitin). D364 serves as the catalytic Proton acceptor. Y394 is subject to Phosphotyrosine; by autocatalysis. Position 505 is a phosphotyrosine (Y505).

Belongs to the protein kinase superfamily. Tyr protein kinase family. SRC subfamily. In terms of assembly, binds to the cytoplasmic domain of cell surface receptors, such as AXL, CD2, CD4, CD5, CD8, CD44, CD45 and CD122. Also binds to effector molecules, such as PI4K, VAV1, RASA1, FYB1 and to other protein kinases including CDK1, RAF1, ZAP70 and SYK. Binds to phosphatidylinositol 3'-kinase (PI3K) from T-lymphocytes through its SH3 domain and to the tyrosine phosphorylated form of KHDRBS1/p70 through its SH2 domain. Interacts with SQSTM1. Interacts with phosphorylated LIME1. Interacts with CBLB and PTPRH. Interacts with RUNX3. Forms a signaling complex with EPHA1, PTK2B and PI3-KINASE; upon activation by EFNA1 which may regulate T-lymphocytes migration. Associates with ZAP70 and RHOH; these interactions allow LCK-mediated RHOH and CD3 subunit phosphorylations in presence of a functional ZAP70. Interacts with CEACAM1 (via cytoplasmic domain); mediates CEACAM1 phosphorylation resulting in PTPN6 recruitment that dephosphorylates TCR stimulation-induced CD247 and ZAP70. Interacts with FYB2. Interacts with CD160. Interacts with CD48. Autophosphorylated on Tyr-394, increasing enzymatic activity, this site is dephosphorylated by PTN22. Phosphorylated on Tyr-505 by CSK, decreasing activity. Dephosphorylated by PTPRC/CD45. Dephosphorylation at Tyr-394 by PTPN2 negatively regulates T-cells differentiation. Dephosphorylation at Tyr-394 by DUSP22 negatively regulates T-cell receptor signaling. Post-translationally, myristoylation is required prior to palmitoylation. In terms of processing, palmitoylation regulates association with the plasma membrane and could be mediated by ZDHHC2. 'Lys-63'-linked ubiquitinated at Lys-99 and Lys-276 by UBR2; this modification is required for autophosphorylation at Tyr-394.

It localises to the cell membrane. The protein localises to the cytoplasm. It is found in the cytosol. The enzyme catalyses L-tyrosyl-[protein] + ATP = O-phospho-L-tyrosyl-[protein] + ADP + H(+). Its activity is regulated as follows. The relative activities of the inhibitory tyrosine-protein kinase CSK and the activating tyrosine-protein phosphatase PTPRC/CD45 determine the level of LCK activity. These interactions allow rapid and efficient activation of LCK in response to TCR stimulation. Non-receptor tyrosine-protein kinase that plays an essential role in the selection and maturation of developing T-cells in the thymus and in the function of mature T-cells. Plays a key role in T-cell antigen receptor (TCR)-linked signal transduction pathways. Constitutively associated with the cytoplasmic portions of the CD4 and CD8 surface receptors. Association of the TCR with a peptide antigen-bound MHC complex facilitates the interaction of CD4 and CD8 with MHC class II and class I molecules, respectively, thereby recruiting the associated LCK protein to the vicinity of the TCR/CD3 complex. LCK then phosphorylates tyrosine residues within the immunoreceptor tyrosine-based activation motifs (ITAM) of the cytoplasmic tails of the TCR-gamma chains and CD3 subunits, initiating the TCR/CD3 signaling pathway. Once stimulated, the TCR recruits the tyrosine kinase ZAP70, that becomes phosphorylated and activated by LCK. Following this, a large number of signaling molecules are recruited, ultimately leading to lymphokine production. LCK also contributes to signaling by other receptor molecules. Associates directly with the cytoplasmic tail of CD2, which leads to hyperphosphorylation and activation of LCK. Also plays a role in the IL2 receptor-linked signaling pathway that controls the T-cell proliferative response. Binding of IL2 to its receptor results in increased activity of LCK. Is expressed at all stages of thymocyte development and is required for the regulation of maturation events that are governed by both pre-TCR and mature alpha beta TCR. Phosphorylates other substrates including RUNX3, PTK2B/PYK2, the microtubule-associated protein MAPT, RHOH or TYROBP. Interacts with UNC119; this interaction plays a crucial role in activation of LCK. In Rattus norvegicus (Rat), this protein is Proto-oncogene tyrosine-protein kinase LCK (Lck).